The chain runs to 263 residues: Ribosomal RNA small subunit methyltransferase A (263 aa).

Residues N20, L22, G47, E68, D90, and N111 each contribute to the S-adenosyl-L-methionine site.

The protein belongs to the class I-like SAM-binding methyltransferase superfamily. rRNA adenine N(6)-methyltransferase family. RsmA subfamily.

It is found in the cytoplasm. It carries out the reaction adenosine(1518)/adenosine(1519) in 16S rRNA + 4 S-adenosyl-L-methionine = N(6)-dimethyladenosine(1518)/N(6)-dimethyladenosine(1519) in 16S rRNA + 4 S-adenosyl-L-homocysteine + 4 H(+). Functionally, specifically dimethylates two adjacent adenosines (A1518 and A1519) in the loop of a conserved hairpin near the 3'-end of 16S rRNA in the 30S particle. May play a critical role in biogenesis of 30S subunits. This Chlorobium chlorochromatii (strain CaD3) protein is Ribosomal RNA small subunit methyltransferase A.